Reading from the N-terminus, the 235-residue chain is Adenosine 5'-phosphosulfate reductase (235 aa).

4 residues coordinate [4Fe-4S] cluster: Cys121, Cys122, Cys204, and Cys207. Catalysis depends on Cys230, which acts as the Nucleophile; cysteine thiosulfonate intermediate.

This sequence belongs to the PAPS reductase family. CysH subfamily. The cofactor is [4Fe-4S] cluster.

It is found in the cytoplasm. The catalysed reaction is [thioredoxin]-disulfide + sulfite + AMP + 2 H(+) = adenosine 5'-phosphosulfate + [thioredoxin]-dithiol. It participates in sulfur metabolism; hydrogen sulfide biosynthesis; sulfite from sulfate. Catalyzes the formation of sulfite from adenosine 5'-phosphosulfate (APS) using thioredoxin as an electron donor. The protein is Adenosine 5'-phosphosulfate reductase of Geobacillus sp. (strain WCH70).